Here is a 264-residue protein sequence, read N- to C-terminus: 5'-nucleotidase SurE (264 aa).

The a divalent metal cation site is built by D10, D11, S43, and N99.

It belongs to the SurE nucleotidase family. It depends on a divalent metal cation as a cofactor.

The protein localises to the cytoplasm. It catalyses the reaction a ribonucleoside 5'-phosphate + H2O = a ribonucleoside + phosphate. Nucleotidase that shows phosphatase activity on nucleoside 5'-monophosphates. The protein is 5'-nucleotidase SurE of Methanococcus maripaludis (strain C5 / ATCC BAA-1333).